The following is a 193-amino-acid chain: Holliday junction branch migration complex subunit RuvA (193 aa).

The segment at 1–64 is domain I; sequence MIGRIAGILL…EDAHLLYGFL (64 aa). Residues 65–139 form a domain II region; sequence TQQERTTFRE…GKLGADLGAL (75 aa). A flexible linker region spans residues 139–143; the sequence is LAGAA. The segment at 144–193 is domain III; that stretch reads SPSDHATDILNALLALGYSEKEGLAAIKNVPAGTGVSEGIKLALKALSKA.

This sequence belongs to the RuvA family. As to quaternary structure, homotetramer. Forms an RuvA(8)-RuvB(12)-Holliday junction (HJ) complex. HJ DNA is sandwiched between 2 RuvA tetramers; dsDNA enters through RuvA and exits via RuvB. An RuvB hexamer assembles on each DNA strand where it exits the tetramer. Each RuvB hexamer is contacted by two RuvA subunits (via domain III) on 2 adjacent RuvB subunits; this complex drives branch migration. In the full resolvosome a probable DNA-RuvA(4)-RuvB(12)-RuvC(2) complex forms which resolves the HJ.

Its subcellular location is the cytoplasm. In terms of biological role, the RuvA-RuvB-RuvC complex processes Holliday junction (HJ) DNA during genetic recombination and DNA repair, while the RuvA-RuvB complex plays an important role in the rescue of blocked DNA replication forks via replication fork reversal (RFR). RuvA specifically binds to HJ cruciform DNA, conferring on it an open structure. The RuvB hexamer acts as an ATP-dependent pump, pulling dsDNA into and through the RuvAB complex. HJ branch migration allows RuvC to scan DNA until it finds its consensus sequence, where it cleaves and resolves the cruciform DNA. This chain is Holliday junction branch migration complex subunit RuvA, found in Burkholderia cenocepacia (strain ATCC BAA-245 / DSM 16553 / LMG 16656 / NCTC 13227 / J2315 / CF5610) (Burkholderia cepacia (strain J2315)).